A 390-amino-acid polypeptide reads, in one-letter code: MPPSGLRLLPLLLPLLWLLVLTPSRPAAGLSTCKTIDMELVKRKRIETIRGQILSKLRLASPPSQGEVPPGPLPEAVLALYNSTRDRVAGESAEPEPEPEADYYAKEVTRVLMVETHNEIYDKFKQSTHSIYMFFNTSELREAVPEPVLLSRAELRLLRLKLKVEQHVELYQKYSNNSWRYLSNRLLAPSNSPEWLSFDVTGVVRQWLSRGGEIEGFRLSAHCSCDSKDNTLQVDINGFTTGRRGDLATIHGMNRPFLLLMATPLERAQHLQSSRHRRALDTNYCFSSTEKNCCVRQLYIDFRKDLGWKWIHEPKGYHANFCLGPCPYIWSLDTQYSKVLALYNQHNPGASAAPCCVPQALEPLPIVYYVGRKPKVEQLSNMIVRSCKCS.

An N-terminal signal peptide occupies residues 1-29 (MPPSGLRLLPLLLPLLWLLVLTPSRPAAG). Residues 30–74 (LSTCKTIDMELVKRKRIETIRGQILSKLRLASPPSQGEVPPGPLP) form a straightjacket domain region. The tract at residues 75-271 (EAVLALYNST…ATPLERAQHL (197 aa)) is arm domain. 3 N-linked (GlcNAc...) asparagine glycosylation sites follow: N82, N136, and N176. Residues 226–252 (DSKDNTLQVDINGFTTGRRGDLATIHG) form a bowtie tail region. A Cell attachment site motif is present at residues 244–246 (RGD). Cystine bridges form between C285/C294, C293/C356, C322/C387, and C326/C389.

Belongs to the TGF-beta family. As to quaternary structure, homodimer; disulfide-linked. Interacts with the serine proteases, HTRA1 and HTRA3: the interaction with either inhibits TGFB1-mediated signaling and the HTRA protease activity is required for this inhibition. May interact with THSD4; this interaction may lead to sequestration by FBN1 microfibril assembly and attenuation of TGFB signaling. Interacts with CD109, DPT and ASPN. Interacts with EFEMP2. Interacts with TSKU; the interaction contributes to regulation of the hair cycle. Interacts with TGFBR3. Homodimer; disulfide-linked. Interacts with transforming growth factor beta-1 (TGF-beta-1) chain; interaction is non-covalent and maintains TGF-beta-1 in a latent state; each latency-associated peptide (LAP) monomer interacts with TGF-beta-1 in the other monomer. Interacts with LTBP1; leading to regulation of TGF-beta-1 activation. Interacts with LRRC32/GARP; leading to regulation of TGF-beta-1 activation on the surface of activated regulatory T-cells (Tregs). Interacts with LRRC33/NRROS; leading to regulation of TGF-beta-1 activation in macrophages and microglia. Interacts (via cell attachment site) with integrins ITGAV and ITGB6 (ITGAV:ITGB6), leading to release of the active TGF-beta-1. Interacts with NREP; the interaction results in a decrease in TGFB1 autoinduction. Interacts with HSP90AB1; inhibits latent TGFB1 activation. In terms of assembly, homodimer; disulfide-linked. Interacts with TGF-beta receptors (TGFBR1 and TGFBR2), leading to signal transduction. Transforming growth factor beta-1 proprotein: The precursor proprotein is cleaved in the Golgi apparatus by FURIN to form Transforming growth factor beta-1 (TGF-beta-1) and Latency-associated peptide (LAP) chains, which remain non-covalently linked, rendering TGF-beta-1 inactive. In terms of processing, N-glycosylated. Deglycosylation leads to activation of Transforming growth factor beta-1 (TGF-beta-1); mechanisms triggering deglycosylation-driven activation of TGF-beta-1 are however unclear.

The protein resides in the secreted. It is found in the extracellular space. Its subcellular location is the extracellular matrix. Functionally, transforming growth factor beta-1 proprotein: Precursor of the Latency-associated peptide (LAP) and Transforming growth factor beta-1 (TGF-beta-1) chains, which constitute the regulatory and active subunit of TGF-beta-1, respectively. Required to maintain the Transforming growth factor beta-1 (TGF-beta-1) chain in a latent state during storage in extracellular matrix. Associates non-covalently with TGF-beta-1 and regulates its activation via interaction with 'milieu molecules', such as LTBP1, LRRC32/GARP and LRRC33/NRROS, that control activation of TGF-beta-1. Interaction with LRRC33/NRROS regulates activation of TGF-beta-1 in macrophages and microglia. Interaction with LRRC32/GARP controls activation of TGF-beta-1 on the surface of activated regulatory T-cells (Tregs). Interaction with integrins (ITGAV:ITGB6 or ITGAV:ITGB8) results in distortion of the Latency-associated peptide chain and subsequent release of the active TGF-beta-1. In terms of biological role, multifunctional protein that regulates the growth and differentiation of various cell types and is involved in various processes, such as normal development, immune function, microglia function and responses to neurodegeneration. Activation into mature form follows different steps: following cleavage of the proprotein in the Golgi apparatus, Latency-associated peptide (LAP) and Transforming growth factor beta-1 (TGF-beta-1) chains remain non-covalently linked rendering TGF-beta-1 inactive during storage in extracellular matrix. At the same time, LAP chain interacts with 'milieu molecules', such as LTBP1, LRRC32/GARP and LRRC33/NRROS that control activation of TGF-beta-1 and maintain it in a latent state during storage in extracellular milieus. TGF-beta-1 is released from LAP by integrins (ITGAV:ITGB6 or ITGAV:ITGB8): integrin-binding to LAP stabilizes an alternative conformation of the LAP bowtie tail and results in distortion of the LAP chain and subsequent release of the active TGF-beta-1. Once activated following release of LAP, TGF-beta-1 acts by binding to TGF-beta receptors (TGFBR1 and TGFBR2), which transduce signal. While expressed by many cells types, TGF-beta-1 only has a very localized range of action within cell environment thanks to fine regulation of its activation by Latency-associated peptide chain (LAP) and 'milieu molecules'. Plays an important role in bone remodeling: acts as a potent stimulator of osteoblastic bone formation, causing chemotaxis, proliferation and differentiation in committed osteoblasts. Can promote either T-helper 17 cells (Th17) or regulatory T-cells (Treg) lineage differentiation in a concentration-dependent manner. At high concentrations, leads to FOXP3-mediated suppression of RORC and down-regulation of IL-17 expression, favoring Treg cell development. At low concentrations in concert with IL-6 and IL-21, leads to expression of the IL-17 and IL-23 receptors, favoring differentiation to Th17 cells. Stimulates sustained production of collagen through the activation of CREB3L1 by regulated intramembrane proteolysis (RIP). Mediates SMAD2/3 activation by inducing its phosphorylation and subsequent translocation to the nucleus. Positively regulates odontoblastic differentiation in dental papilla cells, via promotion of IPO7-mediated translocation of phosphorylated SMAD2 to the nucleus and subsequent transcription of target genes. Can induce epithelial-to-mesenchymal transition (EMT) and cell migration in various cell types. This chain is Transforming growth factor beta-1 proprotein (TGFB1), found in Chlorocebus aethiops (Green monkey).